The sequence spans 186 residues: Large ribosomal subunit protein uL5 (186 aa).

Belongs to the universal ribosomal protein uL5 family. In terms of assembly, part of the 50S ribosomal subunit; part of the 5S rRNA/L5/L18/L25 subcomplex. Contacts the 5S rRNA and the P site tRNA. Forms a bridge to the 30S subunit in the 70S ribosome.

Functionally, this is one of the proteins that bind and probably mediate the attachment of the 5S RNA into the large ribosomal subunit, where it forms part of the central protuberance. In the 70S ribosome it contacts protein S13 of the 30S subunit (bridge B1b), connecting the 2 subunits; this bridge is implicated in subunit movement. Contacts the P site tRNA; the 5S rRNA and some of its associated proteins might help stabilize positioning of ribosome-bound tRNAs. The sequence is that of Large ribosomal subunit protein uL5 from Mycoplasmopsis synoviae (strain 53) (Mycoplasma synoviae).